The chain runs to 287 residues: Phosphatidylserine decarboxylase proenzyme (287 aa).

Residues aspartate 89, histidine 146, and serine 252 each act as charge relay system; for autoendoproteolytic cleavage activity in the active site. Serine 252 (schiff-base intermediate with substrate; via pyruvic acid; for decarboxylase activity) is an active-site residue. Serine 252 carries the pyruvic acid (Ser); by autocatalysis modification.

It belongs to the phosphatidylserine decarboxylase family. PSD-B subfamily. Prokaryotic type I sub-subfamily. As to quaternary structure, heterodimer of a large membrane-associated beta subunit and a small pyruvoyl-containing alpha subunit. Pyruvate serves as cofactor. Post-translationally, is synthesized initially as an inactive proenzyme. Formation of the active enzyme involves a self-maturation process in which the active site pyruvoyl group is generated from an internal serine residue via an autocatalytic post-translational modification. Two non-identical subunits are generated from the proenzyme in this reaction, and the pyruvate is formed at the N-terminus of the alpha chain, which is derived from the carboxyl end of the proenzyme. The autoendoproteolytic cleavage occurs by a canonical serine protease mechanism, in which the side chain hydroxyl group of the serine supplies its oxygen atom to form the C-terminus of the beta chain, while the remainder of the serine residue undergoes an oxidative deamination to produce ammonia and the pyruvoyl prosthetic group on the alpha chain. During this reaction, the Ser that is part of the protease active site of the proenzyme becomes the pyruvoyl prosthetic group, which constitutes an essential element of the active site of the mature decarboxylase.

It localises to the cell membrane. It catalyses the reaction a 1,2-diacyl-sn-glycero-3-phospho-L-serine + H(+) = a 1,2-diacyl-sn-glycero-3-phosphoethanolamine + CO2. It participates in phospholipid metabolism; phosphatidylethanolamine biosynthesis; phosphatidylethanolamine from CDP-diacylglycerol: step 2/2. In terms of biological role, catalyzes the formation of phosphatidylethanolamine (PtdEtn) from phosphatidylserine (PtdSer). The polypeptide is Phosphatidylserine decarboxylase proenzyme (Shewanella halifaxensis (strain HAW-EB4)).